The following is a 728-amino-acid chain: Phosphoribosylformylglycinamidine synthase subunit PurL (728 aa).

His54 is a catalytic residue. ATP-binding residues include Tyr57 and Lys96. Glu98 serves as a coordination point for Mg(2+). Substrate contacts are provided by residues 99 to 102 (SHNH) and Arg121. His100 serves as the catalytic Proton acceptor. Mg(2+) is bound at residue Asp122. A substrate-binding site is contributed by Gln245. Position 273 (Asp273) interacts with Mg(2+). Position 317–319 (317–319 (ETQ)) interacts with substrate. 2 residues coordinate ATP: Asp495 and Gly532. Asn533 serves as a coordination point for Mg(2+). A substrate-binding site is contributed by Ser535.

It belongs to the FGAMS family. Monomer. Part of the FGAM synthase complex composed of 1 PurL, 1 PurQ and 2 PurS subunits.

The protein localises to the cytoplasm. It carries out the reaction N(2)-formyl-N(1)-(5-phospho-beta-D-ribosyl)glycinamide + L-glutamine + ATP + H2O = 2-formamido-N(1)-(5-O-phospho-beta-D-ribosyl)acetamidine + L-glutamate + ADP + phosphate + H(+). Its pathway is purine metabolism; IMP biosynthesis via de novo pathway; 5-amino-1-(5-phospho-D-ribosyl)imidazole from N(2)-formyl-N(1)-(5-phospho-D-ribosyl)glycinamide: step 1/2. Its function is as follows. Part of the phosphoribosylformylglycinamidine synthase complex involved in the purines biosynthetic pathway. Catalyzes the ATP-dependent conversion of formylglycinamide ribonucleotide (FGAR) and glutamine to yield formylglycinamidine ribonucleotide (FGAM) and glutamate. The FGAM synthase complex is composed of three subunits. PurQ produces an ammonia molecule by converting glutamine to glutamate. PurL transfers the ammonia molecule to FGAR to form FGAM in an ATP-dependent manner. PurS interacts with PurQ and PurL and is thought to assist in the transfer of the ammonia molecule from PurQ to PurL. The chain is Phosphoribosylformylglycinamidine synthase subunit PurL from Macrococcus caseolyticus (strain JCSC5402) (Macrococcoides caseolyticum).